The sequence spans 583 residues: Tetratricopeptide repeat protein 39C (583 aa).

Residues 1 to 22 (MAGSEQQRPRRRDDGDSDAAAA) form a disordered region. TPR repeat units lie at residues 315-348 (SLFM…AVDQ), 353-386 (HVCL…SRWS), and 485-518 (GLKY…ELCR).

It belongs to the TTC39 family.

This chain is Tetratricopeptide repeat protein 39C (TTC39C), found in Homo sapiens (Human).